The chain runs to 162 residues: D-aminoacyl-tRNA deacylase (162 aa).

A Gly-cisPro motif, important for rejection of L-amino acids motif is present at residues 145 to 146 (GP).

It belongs to the DTD family. Homodimer.

It is found in the cytoplasm. The enzyme catalyses glycyl-tRNA(Ala) + H2O = tRNA(Ala) + glycine + H(+). The catalysed reaction is a D-aminoacyl-tRNA + H2O = a tRNA + a D-alpha-amino acid + H(+). Its function is as follows. An aminoacyl-tRNA editing enzyme that deacylates mischarged D-aminoacyl-tRNAs. Also deacylates mischarged glycyl-tRNA(Ala), protecting cells against glycine mischarging by AlaRS. Acts via tRNA-based rather than protein-based catalysis; rejects L-amino acids rather than detecting D-amino acids in the active site. By recycling D-aminoacyl-tRNA to D-amino acids and free tRNA molecules, this enzyme counteracts the toxicity associated with the formation of D-aminoacyl-tRNA entities in vivo and helps enforce protein L-homochirality. The chain is D-aminoacyl-tRNA deacylase from Bifidobacterium longum (strain NCC 2705).